We begin with the raw amino-acid sequence, 365 residues long: Donuts protein 1 (365 aa).

A disordered region spans residues 28–49; that stretch reads NSGLELPSQDYTNVEEKESSPK. The CUE domain occupies 82–125; the sequence is EKLCVLKELKIAFPEVDDTLIKAILIASQGVLEPAFNSLLYYSS. Disordered stretches follow at residues 215–246 and 286–335; these read HNTI…KGVN and ESEE…YKSA. The segment covering 224–244 has biased composition (basic and acidic residues); sequence SILKGKEKGKEEEKEKGEEKG. Residues 286 to 295 are compositionally biased toward acidic residues; sequence ESEEEEEQDV. Basic and acidic residues predominate over residues 315–331; that stretch reads EAQRDSADRLPAKDDGG.

May interact directly with ADY3. Probable component of a spindle pole body (SPB) complex composed of ADY3, SSP1, DON1, MPC54, SPO21/MPC70, NUD1 and CNM67.

It localises to the prospore membrane. Functionally, involved in the pathway that organizes the prospore membrane (PSM) during sporulation. The sequence is that of Donuts protein 1 (DON1) from Saccharomyces cerevisiae (strain ATCC 204508 / S288c) (Baker's yeast).